Here is an 828-residue protein sequence, read N- to C-terminus: Zinc finger protein 438 (828 aa).

Disordered regions lie at residues 1–29, 143–173, and 193–231; these read MQNSVSVPPKDEGESNIPSGTIQSRKGLQ, KSGCSKAPAQTQMCPQMSPSPPHHPELLYKP, and ALTNGSDHGDLRPPVTNTHGSLNPPATPASSTPEEPAKQ. Composition is skewed to polar residues over residues 16-29 and 150-159; these read NIPSGTIQSRKGLQ and PAQTQMCPQM. 3 consecutive C2H2-type zinc fingers follow at residues 507–529, 535–557, and 567–590; these read HRCHVCNHHFQFKQHLRDHMNTH, YSCRICRKSYVRPGSLSTHMKLH, and MCCEFCAKVFGHIRVYFGHLKEVH. The segment at 680–721 is disordered; sequence EGTFPGSKGTQEELVQHASPDWKRHPERGKPEKVHSSSEESH. Residues 689 to 721 are compositionally biased toward basic and acidic residues; sequence TQEELVQHASPDWKRHPERGKPEKVHSSSEESH. The C2H2-type 4 zinc-finger motif lies at 776-799; sequence FNCLLCAEMLGRKEDLLHHWKHQH.

It belongs to the krueppel C2H2-type zinc-finger protein family. As to expression, ubiquitous.

It localises to the nucleus. Isoform 1 acts as a transcriptional repressor. This chain is Zinc finger protein 438 (ZNF438), found in Homo sapiens (Human).